A 480-amino-acid polypeptide reads, in one-letter code: Protein nucleotidyltransferase YdiU (480 aa).

ATP is bound by residues Gly86, Gly88, Arg89, Lys109, Asp121, Gly122, Arg172, and Arg179. Asp248 acts as the Proton acceptor in catalysis. Mg(2+) contacts are provided by Asn249 and Asp258. Asp258 provides a ligand contact to ATP.

The protein belongs to the SELO family. Mg(2+) serves as cofactor. Mn(2+) is required as a cofactor.

The enzyme catalyses L-seryl-[protein] + ATP = 3-O-(5'-adenylyl)-L-seryl-[protein] + diphosphate. It carries out the reaction L-threonyl-[protein] + ATP = 3-O-(5'-adenylyl)-L-threonyl-[protein] + diphosphate. It catalyses the reaction L-tyrosyl-[protein] + ATP = O-(5'-adenylyl)-L-tyrosyl-[protein] + diphosphate. The catalysed reaction is L-histidyl-[protein] + UTP = N(tele)-(5'-uridylyl)-L-histidyl-[protein] + diphosphate. The enzyme catalyses L-seryl-[protein] + UTP = O-(5'-uridylyl)-L-seryl-[protein] + diphosphate. It carries out the reaction L-tyrosyl-[protein] + UTP = O-(5'-uridylyl)-L-tyrosyl-[protein] + diphosphate. In terms of biological role, nucleotidyltransferase involved in the post-translational modification of proteins. It can catalyze the addition of adenosine monophosphate (AMP) or uridine monophosphate (UMP) to a protein, resulting in modifications known as AMPylation and UMPylation. This chain is Protein nucleotidyltransferase YdiU, found in Salmonella schwarzengrund (strain CVM19633).